Here is a 293-residue protein sequence, read N- to C-terminus: tRNA pseudouridine synthase B (293 aa).

D39 serves as the catalytic Nucleophile.

This sequence belongs to the pseudouridine synthase TruB family. Type 1 subfamily.

The catalysed reaction is uridine(55) in tRNA = pseudouridine(55) in tRNA. Its function is as follows. Responsible for synthesis of pseudouridine from uracil-55 in the psi GC loop of transfer RNAs. In Streptococcus mutans serotype c (strain ATCC 700610 / UA159), this protein is tRNA pseudouridine synthase B.